The chain runs to 79 residues: Spidroin-1 (79 aa).

The protein belongs to the silk fibroin family. Major subunit, with spidroin 2, of the dragline silk.

Its subcellular location is the secreted. It is found in the extracellular space. Its function is as follows. Spiders' major ampullate silk possesses unique characteristics of strength and elasticity. Fibroin consists of pseudocrystalline regions of antiparallel beta-sheet interspersed with elastic amorphous segments. The sequence is that of Spidroin-1 from Araneus bicentenarius (Giant lichen orbweaver).